We begin with the raw amino-acid sequence, 32 residues long: Peptide tarsal-less AA (32 aa).

Residues 1–32 (MLDPTGTYRRPRDTQDSRQKRRQDCLDPTGQY) form a disordered region. Copy 1 of the repeat occupies 2–8 (LDPTGTY). Residues 2–32 (LDPTGTYRRPRDTQDSRQKRRQDCLDPTGQY) form a 2 X 7 AA repeats of L-D-P-T-G-[TQ]-Y region. Residues 10-25 (RPRDTQDSRQKRRQDC) show a composition bias toward basic and acidic residues. Repeat unit 2 spans residues 26–32 (LDPTGQY).

It is found in the cytoplasm. Its subcellular location is the nucleus. One of four peptides (tal-1A, tal-2A, tal-3A and tal-AA) produced from a polycistronic gene that function redundantly in several developmental processes. Required in early stages of leg development for the intercalation of the tarsal segments during the mid-third instar stage and later for tarsal joint formation. Promotes the post-translational modification of ovo isoform B (svb) into its active form which in turn initiates trichome development and promotes tarsal joint development. This is likely due to recruitment of the E3 ubiquitin-protein ligase Ubr3 to svb for ubiquitination of its N-terminus, converting svb into a transcriptional activator. Also enhances interaction of Ubr3 with Diap1. Required for correct wing and leg formation through its regulation of several genes including those in the Notch signaling pathway. Essential for denticle formation and may have a role in the developmental timing of trichome differentiation. Essential for the development of taenidial folds in the trachea. This Drosophila melanogaster (Fruit fly) protein is Peptide tarsal-less AA.